The sequence spans 920 residues: Coatomer subunit beta'-1 (920 aa).

8 WD repeats span residues 13-52 (QRSE…MVKS), 55-94 (VTEL…KIKV), 97-136 (AHAD…LCTQ), 140-180 (GHSH…PNFT), 183-224 (AHLK…CVQT), 227-266 (GHTH…LENT), 350-392 (TCDL…GSAL), and 460-500 (RIDV…SYFD). The interval 850–920 (LEQGDVLDEV…EQWVLTPPQE (71 aa)) is disordered. Over residues 854-875 (DVLDEVGEEGEDGEEEEEEDRQ) the composition is skewed to acidic residues.

The protein belongs to the WD repeat COPB2 family. In terms of assembly, oligomeric complex that consists of at least the alpha, beta, beta', gamma, delta, epsilon and zeta subunits.

It localises to the cytoplasm. It is found in the golgi apparatus membrane. The protein localises to the cytoplasmic vesicle. Its subcellular location is the COPI-coated vesicle membrane. The coatomer is a cytosolic protein complex that binds to dilysine motifs and reversibly associates with Golgi non-clathrin-coated vesicles, which further mediate biosynthetic protein transport from the ER, via the Golgi up to the trans Golgi network. Coatomer complex is required for budding from Golgi membranes, and is essential for the retrograde Golgi-to-ER transport of dilysine-tagged proteins. This chain is Coatomer subunit beta'-1, found in Arabidopsis thaliana (Mouse-ear cress).